The sequence spans 381 residues: Alcohol dehydrogenase class-3 (381 aa).

Cysteine 49 contributes to the Zn(2+) binding site. Histidine 50 is a binding site for NAD(+). The an alcohol site is built by threonine 51 and histidine 71. 7 residues coordinate Zn(2+): histidine 71, glutamate 72, cysteine 101, cysteine 104, cysteine 107, cysteine 115, and cysteine 179. Residues 204–209, aspartate 228, lysine 233, isoleucine 274, 297–299, 322–324, and arginine 374 contribute to the NAD(+) site; these read GLGTVG, VGV, and TAF.

The protein belongs to the zinc-containing alcohol dehydrogenase family. Class-III subfamily. As to quaternary structure, homodimer. Zn(2+) serves as cofactor.

It localises to the cytoplasm. It carries out the reaction a primary alcohol + NAD(+) = an aldehyde + NADH + H(+). The enzyme catalyses a secondary alcohol + NAD(+) = a ketone + NADH + H(+). The catalysed reaction is S-(hydroxymethyl)glutathione + NADP(+) = S-formylglutathione + NADPH + H(+). It catalyses the reaction S-(hydroxymethyl)glutathione + NAD(+) = S-formylglutathione + NADH + H(+). The chain is Alcohol dehydrogenase class-3 from Oryza sativa subsp. japonica (Rice).